Reading from the N-terminus, the 229-residue chain is Heptaprenylglyceryl phosphate synthase (229 aa).

Sn-glycerol 1-phosphate is bound at residue Lys-12. 2 residues coordinate Mg(2+): Asp-14 and Thr-40. Sn-glycerol 1-phosphate-binding positions include 159–164 (YIEYSG), Gly-189, and 209–210 (GN).

It belongs to the GGGP/HepGP synthase family. Group I subfamily. In terms of assembly, homodimer. The cofactor is Mg(2+).

The enzyme catalyses sn-glycerol 1-phosphate + all-trans-heptaprenyl diphosphate = 3-heptaprenyl-sn-glycero-1-phosphate + diphosphate. Its pathway is membrane lipid metabolism; glycerophospholipid metabolism. In terms of biological role, prenyltransferase that catalyzes in vivo the transfer of the heptaprenyl moiety of heptaprenyl pyrophosphate (HepPP; 35 carbon atoms) to the C3 hydroxyl of sn-glycerol-1-phosphate (G1P), producing heptaprenylglyceryl phosphate (HepGP). This reaction is an ether-bond-formation step in the biosynthesis of archaea-type G1P-based membrane lipids found in Bacillales. The polypeptide is Heptaprenylglyceryl phosphate synthase (Staphylococcus saprophyticus subsp. saprophyticus (strain ATCC 15305 / DSM 20229 / NCIMB 8711 / NCTC 7292 / S-41)).